The following is a 583-amino-acid chain: Ankyrin repeat-containing protein NPR4 (583 aa).

ANK repeat units follow at residues 68–97, 119–148, 154–183, 188–218, 223–252, 257–286, and 291–321; these read HNDT…AAVA, AGET…AEGV, SGYD…LLAK, ANTS…GLVE, NGKN…QLAR, KGQT…AIVM, and NGNT…HVNA. 4 consecutive transmembrane segments (helical) span residues 414–434, 452–472, 492–512, and 518–538; these read VTVV…TVPG, IFFI…VVQI, LMWL…YIVL, and WAAL…LGTM.

The protein localises to the cell membrane. Involved in salt stress tolerance. The chain is Ankyrin repeat-containing protein NPR4 from Oryza sativa subsp. japonica (Rice).